A 264-amino-acid chain; its full sequence is MRTYLDLLQHVLDHGVDRDDRTGTGTRSVFGYQMRFDLEEGFPVLTTKKLHLRSIIHELLWFLKGDTNIAYLKENGVTIWDEWADENGDLGPVYGYQWRSWPAPDGRHIDQIANLLKMLHTNPQSRSLIVSAWNPALVDEMALPPCHCLFQFYVANGRLSCQLYQRSADIFLGVPFNIASYALLTMMIAQVTGLKPGEFIHTLGDAHIYSNHFEQARLQLTRTPKKLPVMHINPDVKDLFAFRFEDFRLDGYEADPTIKAPIAV.

Arg-21 contributes to the dUMP binding site. His-51 lines the (6R)-5,10-methylene-5,6,7,8-tetrahydrofolate pocket. Cys-146 acts as the Nucleophile in catalysis. DUMP-binding positions include 166-169, Asn-177, and 207-209; these read RSAD and HIY. Asp-169 is a binding site for (6R)-5,10-methylene-5,6,7,8-tetrahydrofolate. Ala-263 lines the (6R)-5,10-methylene-5,6,7,8-tetrahydrofolate pocket.

Belongs to the thymidylate synthase family. Bacterial-type ThyA subfamily. Homodimer.

It localises to the cytoplasm. It catalyses the reaction dUMP + (6R)-5,10-methylene-5,6,7,8-tetrahydrofolate = 7,8-dihydrofolate + dTMP. It participates in pyrimidine metabolism; dTTP biosynthesis. In terms of biological role, catalyzes the reductive methylation of 2'-deoxyuridine-5'-monophosphate (dUMP) to 2'-deoxythymidine-5'-monophosphate (dTMP) while utilizing 5,10-methylenetetrahydrofolate (mTHF) as the methyl donor and reductant in the reaction, yielding dihydrofolate (DHF) as a by-product. This enzymatic reaction provides an intracellular de novo source of dTMP, an essential precursor for DNA biosynthesis. This Brucella canis (strain ATCC 23365 / NCTC 10854 / RM-666) protein is Thymidylate synthase.